The chain runs to 592 residues: Bifunctional enzyme BirA/CoaX (592 aa).

The tract at residues 1-329 (MTVLKLSHWR…ISLRSDDRPV (329 aa)) is biotin--protein ligase. Residues 83 to 259 (QTALKHECAS…ELDAVLLQYA (177 aa)) form the BPL/LPL catalytic domain. A type III pantothenate kinase region spans residues 336–592 (DSERFLLLDG…AAEGREYEHI (257 aa)). ATP is bound at residue 344-351 (DGGNSRLK). Residues Tyr-426 and 433-436 (GSDR) contribute to the substrate site. The Proton acceptor role is filled by Asp-435. Thr-458 lines the ATP pocket. Thr-508 is a binding site for substrate.

This sequence in the N-terminal section; belongs to the biotin--protein ligase family. The protein in the C-terminal section; belongs to the type III pantothenate kinase family. Requires NH4(+) as cofactor. The cofactor is K(+).

It is found in the cytoplasm. It catalyses the reaction biotin + L-lysyl-[protein] + ATP = N(6)-biotinyl-L-lysyl-[protein] + AMP + diphosphate + H(+). The catalysed reaction is (R)-pantothenate + ATP = (R)-4'-phosphopantothenate + ADP + H(+). Its pathway is cofactor biosynthesis; coenzyme A biosynthesis; CoA from (R)-pantothenate: step 1/5. Its function is as follows. Activates biotin to form biotinyl-5'-adenylate and transfers the biotin moiety to biotin-accepting proteins. Functionally, catalyzes the phosphorylation of pantothenate (Pan), the first step in CoA biosynthesis. This chain is Bifunctional enzyme BirA/CoaX (birA/coaX), found in Neisseria meningitidis serogroup B (strain ATCC BAA-335 / MC58).